A 130-amino-acid chain; its full sequence is Protein NrdI (130 aa).

The protein belongs to the NrdI family.

Its function is as follows. Probably involved in ribonucleotide reductase function. The sequence is that of Protein NrdI from Bacillus velezensis (strain DSM 23117 / BGSC 10A6 / LMG 26770 / FZB42) (Bacillus amyloliquefaciens subsp. plantarum).